A 291-amino-acid chain; its full sequence is Lipoyl synthase 1 (291 aa).

Cysteine 34, cysteine 39, cysteine 45, cysteine 60, cysteine 64, cysteine 67, and serine 274 together coordinate [4Fe-4S] cluster. The 218-residue stretch at 46–263 folds into the Radical SAM core domain; the sequence is FQAGTATFLI…QVYGEELGFL (218 aa).

It belongs to the radical SAM superfamily. Lipoyl synthase family. The cofactor is [4Fe-4S] cluster.

Its subcellular location is the cytoplasm. It carries out the reaction [[Fe-S] cluster scaffold protein carrying a second [4Fe-4S](2+) cluster] + N(6)-octanoyl-L-lysyl-[protein] + 2 oxidized [2Fe-2S]-[ferredoxin] + 2 S-adenosyl-L-methionine + 4 H(+) = [[Fe-S] cluster scaffold protein] + N(6)-[(R)-dihydrolipoyl]-L-lysyl-[protein] + 4 Fe(3+) + 2 hydrogen sulfide + 2 5'-deoxyadenosine + 2 L-methionine + 2 reduced [2Fe-2S]-[ferredoxin]. The protein operates within protein modification; protein lipoylation via endogenous pathway; protein N(6)-(lipoyl)lysine from octanoyl-[acyl-carrier-protein]: step 2/2. Its function is as follows. Catalyzes the radical-mediated insertion of two sulfur atoms into the C-6 and C-8 positions of the octanoyl moiety bound to the lipoyl domains of lipoate-dependent enzymes, thereby converting the octanoylated domains into lipoylated derivatives. The protein is Lipoyl synthase 1 of Nostoc sp. (strain PCC 7120 / SAG 25.82 / UTEX 2576).